The sequence spans 426 residues: Serine--tRNA ligase (426 aa).

231–233 lines the L-serine pocket; the sequence is TAE. 262–264 contributes to the ATP binding site; the sequence is RAE. Glutamate 285 is a binding site for L-serine. 349-352 lines the ATP pocket; that stretch reads EISS. Serine 385 is an L-serine binding site.

The protein belongs to the class-II aminoacyl-tRNA synthetase family. Type-1 seryl-tRNA synthetase subfamily. In terms of assembly, homodimer. The tRNA molecule binds across the dimer.

It is found in the cytoplasm. The enzyme catalyses tRNA(Ser) + L-serine + ATP = L-seryl-tRNA(Ser) + AMP + diphosphate + H(+). It catalyses the reaction tRNA(Sec) + L-serine + ATP = L-seryl-tRNA(Sec) + AMP + diphosphate + H(+). It functions in the pathway aminoacyl-tRNA biosynthesis; selenocysteinyl-tRNA(Sec) biosynthesis; L-seryl-tRNA(Sec) from L-serine and tRNA(Sec): step 1/1. Functionally, catalyzes the attachment of serine to tRNA(Ser). Is also able to aminoacylate tRNA(Sec) with serine, to form the misacylated tRNA L-seryl-tRNA(Sec), which will be further converted into selenocysteinyl-tRNA(Sec). This Myxococcus xanthus (strain DK1622) protein is Serine--tRNA ligase.